A 219-amino-acid chain; its full sequence is Isovaleryl-homoserine lactone synthase (219 aa).

This sequence belongs to the autoinducer synthase family.

The enzyme catalyses 3-methylbutanoyl-CoA + S-adenosyl-L-methionine = N-isovaleryl-L-homoserine lactone + S-methyl-5'-thioadenosine + CoA + H(+). Its function is as follows. Catalyzes the synthesis of IV-HSL (isovaleryl-homoserine lactone), a quorum-sensing (QS) autoinducer molecule which binds to BjaR1 transcriptional regulator to activate expression of QS-dependent genes. Is active with isovaleryl-CoA but cannot use isovaleryl-ACP as acyl donor. This chain is Isovaleryl-homoserine lactone synthase (bjaI), found in Bradyrhizobium diazoefficiens (strain JCM 10833 / BCRC 13528 / IAM 13628 / NBRC 14792 / USDA 110).